The primary structure comprises 42 residues: Photosystem I reaction center subunit IX (42 aa).

Residues 7 to 27 (FLSTAPVLIMALLTFTAGLLI) form a helical membrane-spanning segment.

The protein belongs to the PsaJ family.

The protein localises to the cellular thylakoid membrane. Functionally, may help in the organization of the PsaE and PsaF subunits. The polypeptide is Photosystem I reaction center subunit IX (Rippkaea orientalis (strain PCC 8801 / RF-1) (Cyanothece sp. (strain PCC 8801))).